A 348-amino-acid chain; its full sequence is Lysophosphatidic acid receptor 2 (348 aa).

The Extracellular segment spans residues 1–30 (MGQCYYNETIGFFYNNSGKELSSHWRPKDV). Residues Asn7 and Asn15 are each glycosylated (N-linked (GlcNAc...) asparagine). The helical transmembrane segment at 31-51 (VVVALGLTVSVLVLLTNLLVI) threads the bilayer. The Cytoplasmic portion of the chain corresponds to 52–66 (AAIASNRRFHQPIYY). A helical transmembrane segment spans residues 67-87 (LLGNLAAADLFAGVAYLFLMF). At 88 to 100 (HTGPRTARLSLEG) the chain is on the extracellular side. The chain crosses the membrane as a helical span at residues 101–123 (WFLRQGLLDTSLTASVATLLAIA). Over 124-143 (VERHRSVMAVQLHSRLPRGR) the chain is Cytoplasmic. The helical transmembrane segment at 144–164 (VVMLIVGVWVAALGLGLLPAH) threads the bilayer. Over 165-185 (SWHCLCALDRCSRMAPLLSRS) the chain is Extracellular. A helical transmembrane segment spans residues 186–206 (YLAVWALSSLLVFLLMVAVYT). At 207–239 (RIFFYVRRRVQRMAEHVSCHPRYRETTLSLVKT) the chain is on the cytoplasmic side. The chain crosses the membrane as a helical span at residues 240–260 (VVIILGAFVVCWTPGQVVLLL). Over 261–276 (DGLGCESCNVLAVEKY) the chain is Extracellular. A helical membrane pass occupies residues 277 to 294 (FLLLAEANSLVNAAVYSC). Over 295 to 348 (RDAEMRRTFRRLLCCACLRQSTRESVHYTSSAQGGASTRIMLPENGHPLMDSTL) the chain is Cytoplasmic. Residue Cys308 is the site of S-palmitoyl cysteine attachment. The PDZ-binding signature appears at 345 to 348 (DSTL).

This sequence belongs to the G-protein coupled receptor 1 family. Interacts with SLC9A3R2/NHERF2, MAGI3 and PLCB3. Interacts with RALA and GRK2. In terms of tissue distribution, expressed most abundantly in testes and peripheral blood leukocytes with less expression in pancreas, spleen, thymus and prostate. Little or no expression in heart, brain, placenta, lung, liver, skeletal muscle, kidney, ovary, small intestine, or colon.

It localises to the cell surface. Its subcellular location is the cell membrane. In terms of biological role, receptor for lysophosphatidic acid (LPA), a mediator of diverse cellular activities. Seems to be coupled to the G(i)/G(o), G(12)/G(13), and G(q) families of heteromeric G proteins. Plays a key role in phospholipase C-beta (PLC-beta) signaling pathway. Stimulates phospholipase C (PLC) activity in a manner that is independent of RALA activation. The sequence is that of Lysophosphatidic acid receptor 2 from Homo sapiens (Human).